The following is a 386-amino-acid chain: Succinyl-diaminopimelate desuccinylase (386 aa).

Position 77 (histidine 77) interacts with Zn(2+). Aspartate 79 is a catalytic residue. Aspartate 110 is a Zn(2+) binding site. Glutamate 144 (proton acceptor) is an active-site residue. Zn(2+)-binding residues include glutamate 145, glutamate 173, and histidine 359.

Belongs to the peptidase M20A family. DapE subfamily. In terms of assembly, homodimer. The cofactor is Zn(2+). Co(2+) is required as a cofactor.

The enzyme catalyses N-succinyl-(2S,6S)-2,6-diaminopimelate + H2O = (2S,6S)-2,6-diaminopimelate + succinate. It functions in the pathway amino-acid biosynthesis; L-lysine biosynthesis via DAP pathway; LL-2,6-diaminopimelate from (S)-tetrahydrodipicolinate (succinylase route): step 3/3. Functionally, catalyzes the hydrolysis of N-succinyl-L,L-diaminopimelic acid (SDAP), forming succinate and LL-2,6-diaminopimelate (DAP), an intermediate involved in the bacterial biosynthesis of lysine and meso-diaminopimelic acid, an essential component of bacterial cell walls. The protein is Succinyl-diaminopimelate desuccinylase of Ralstonia pickettii (strain 12J).